Consider the following 191-residue polypeptide: Dephospho-CoA kinase (191 aa).

The 189-residue stretch at 3–191 (AIGITGSYAS…KLIKDLECRV (189 aa)) folds into the DPCK domain. Residue 11–16 (ASGKTF) coordinates ATP.

This sequence belongs to the CoaE family.

It localises to the cytoplasm. The catalysed reaction is 3'-dephospho-CoA + ATP = ADP + CoA + H(+). Its pathway is cofactor biosynthesis; coenzyme A biosynthesis; CoA from (R)-pantothenate: step 5/5. Its function is as follows. Catalyzes the phosphorylation of the 3'-hydroxyl group of dephosphocoenzyme A to form coenzyme A. The chain is Dephospho-CoA kinase from Rickettsia conorii (strain ATCC VR-613 / Malish 7).